Consider the following 428-residue polypeptide: Histidine--tRNA ligase (428 aa).

It belongs to the class-II aminoacyl-tRNA synthetase family. As to quaternary structure, homodimer.

Its subcellular location is the cytoplasm. It carries out the reaction tRNA(His) + L-histidine + ATP = L-histidyl-tRNA(His) + AMP + diphosphate + H(+). This is Histidine--tRNA ligase (hisS) from Chlamydia muridarum (strain MoPn / Nigg).